The sequence spans 166 residues: Protein SprT (166 aa).

A SprT-like domain is found at 19–164 (RDALARANLK…CVRCGDTLVA (146 aa)). Residue His-78 participates in Zn(2+) binding. The active site involves Glu-79. Zn(2+) is bound at residue His-82.

The protein belongs to the SprT family. It depends on Zn(2+) as a cofactor.

Its subcellular location is the cytoplasm. The sequence is that of Protein SprT from Cronobacter sakazakii (strain ATCC BAA-894) (Enterobacter sakazakii).